Here is a 560-residue protein sequence, read N- to C-terminus: Membrane protein insertase YidC (560 aa).

Residues 1–21 (MDIKRTILIAALAVVSYVMVL) traverse the membrane as a helical segment. The segment at 42 to 66 (VAPGLPDGVPAGNNGASADVPSANA) is disordered. The next 5 helical transmembrane spans lie at 341–361 (LELT…FWLL), 367–387 (LLGN…GLFF), 437–457 (LGGC…YWVL), 468–488 (WILW…PIIM), and 515–535 (PIIF…YWVV).

Belongs to the OXA1/ALB3/YidC family. Type 1 subfamily. Interacts with the Sec translocase complex via SecD. Specifically interacts with transmembrane segments of nascent integral membrane proteins during membrane integration.

It localises to the cell inner membrane. Required for the insertion and/or proper folding and/or complex formation of integral membrane proteins into the membrane. Involved in integration of membrane proteins that insert both dependently and independently of the Sec translocase complex, as well as at least some lipoproteins. Aids folding of multispanning membrane proteins. This is Membrane protein insertase YidC from Pseudomonas putida (strain ATCC 47054 / DSM 6125 / CFBP 8728 / NCIMB 11950 / KT2440).